We begin with the raw amino-acid sequence, 274 residues long: Exosome complex component Rrp42 (274 aa).

Belongs to the RNase PH family. Rrp42 subfamily. As to quaternary structure, component of the archaeal exosome complex. Forms a hexameric ring-like arrangement composed of 3 Rrp41-Rrp42 heterodimers. The hexameric ring associates with a trimer of Rrp4 and/or Csl4 subunits.

Its subcellular location is the cytoplasm. Its function is as follows. Non-catalytic component of the exosome, which is a complex involved in RNA degradation. Contributes to the structuring of the Rrp41 active site. This chain is Exosome complex component Rrp42, found in Pyrobaculum aerophilum (strain ATCC 51768 / DSM 7523 / JCM 9630 / CIP 104966 / NBRC 100827 / IM2).